A 245-amino-acid polypeptide reads, in one-letter code: 1-(5-phosphoribosyl)-5-[(5-phosphoribosylamino)methylideneamino] imidazole-4-carboxamide isomerase (245 aa).

The Proton acceptor role is filled by Asp7. Residue Asp129 is the Proton donor of the active site.

The protein belongs to the HisA/HisF family.

It is found in the cytoplasm. The enzyme catalyses 1-(5-phospho-beta-D-ribosyl)-5-[(5-phospho-beta-D-ribosylamino)methylideneamino]imidazole-4-carboxamide = 5-[(5-phospho-1-deoxy-D-ribulos-1-ylimino)methylamino]-1-(5-phospho-beta-D-ribosyl)imidazole-4-carboxamide. It participates in amino-acid biosynthesis; L-histidine biosynthesis; L-histidine from 5-phospho-alpha-D-ribose 1-diphosphate: step 4/9. This Psychromonas ingrahamii (strain DSM 17664 / CCUG 51855 / 37) protein is 1-(5-phosphoribosyl)-5-[(5-phosphoribosylamino)methylideneamino] imidazole-4-carboxamide isomerase.